The chain runs to 110 residues: Cuticle protein 13 (110 aa).

The polypeptide is Cuticle protein 13 (Limulus polyphemus (Atlantic horseshoe crab)).